Reading from the N-terminus, the 1624-residue chain is ATP-binding cassette sub-family A member 6 (1624 aa).

A helical membrane pass occupies residues L31–A51. N-linked (GlcNAc...) asparagine glycosylation is found at N84 and N91. The next 6 helical transmembrane spans lie at I222–V242, W267–T287, F297–L317, V326–V346, E356–F376, and V395–L415. The ABC transporter 1 domain maps to I478–F713. Residue G514 to S521 coordinates ATP. The N-linked (GlcNAc...) asparagine glycan is linked to N576. The next 8 helical transmembrane spans lie at A854–V874, L971–H991, F1005–C1025, W1058–F1078, I1094–Y1114, W1130–F1150, L1154–L1174, and A1194–L1214. One can recognise an ABC transporter 2 domain in the interval L1282–R1520. An ATP-binding site is contributed by G1320–S1327.

Belongs to the ABC transporter superfamily. ABCA family. In terms of tissue distribution, widely expressed with higher expression in heart, lung, brain, spleen and testis.

The protein localises to the golgi apparatus membrane. Its function is as follows. Probable transporter which may play a role in macrophage lipid transport and homeostasis. This is ATP-binding cassette sub-family A member 6 (Abca6) from Mus musculus (Mouse).